The chain runs to 187 residues: Intermembrane transport lipoprotein PqiC (187 aa).

Residues 1–15 (MKKWLVTIAALWLAG) form the signal peptide. The N-palmitoyl cysteine moiety is linked to residue Cys16. Residue Cys16 is the site of S-diacylglycerol cysteine attachment.

In terms of assembly, may form a complex composed of PqiA, PqiB and PqiC. Interacts with PqiB.

It localises to the cell outer membrane. Component of a transport pathway that contributes to membrane integrity. The sequence is that of Intermembrane transport lipoprotein PqiC from Escherichia coli (strain K12).